Consider the following 889-residue polypeptide: Mixed-linked glucan synthase 2 (889 aa).

Positions 34 to 53 (AGADGQNGRRSPVAKRVNDG) are disordered. 2 helical membrane-spanning segments follow: residues 93-113 (ILHPYRFLILLRLIAIVAFFA) and 123-143 (GVWLWTMSMVGDVWFGFSWVL). The active site involves D213. A coiled-coil region spans residues 265–293 (ELMSDHRRVRREYEEFKVRIDSLSSTIRQ). D411 and D413 together coordinate substrate. D579 is an active-site residue. 6 helical membrane passes run 655-675 (TYPIVTVFIFFYNLFPVMWLI), 685-705 (FGEYLLYLVAVIAMIHVIGMF), 723-743 (FYMIGSTGVYPTAVLYMALKL), 777-797 (LLIPTIVIIVVNVAAVGVAVG), 811-831 (LAVLGMVFNVWILVLLYPFAL), and 842-862 (AVLFVAMAMAVAAVAAMYVAF).

This sequence belongs to the glycosyltransferase 2 family. Plant cellulose synthase-like F subfamily.

It is found in the golgi apparatus membrane. Its function is as follows. Catalyzes both beta-1,3 and beta-1,4 glycosidic linkage on beta-D-glucan. Essential for (1,3;1,4)-beta-D-glucans synthesis in grasses and cereals (Poaceae). The mixed-linked glucans (which are not present in walls of dicotyledons or most other monocotyledonous plants) are particularly important constituents of the walls of the starchy endosperm and aleurone cells of cereal grains such as oats, wheat, rice and barley. They can account for up to 70% by weight of the wall. This is Mixed-linked glucan synthase 2 (CSLF2) from Oryza sativa subsp. japonica (Rice).